Reading from the N-terminus, the 185-residue chain is ATP synthase subunit delta (185 aa).

This sequence belongs to the ATPase delta chain family. F-type ATPases have 2 components, F(1) - the catalytic core - and F(0) - the membrane proton channel. F(1) has five subunits: alpha(3), beta(3), gamma(1), delta(1), epsilon(1). F(0) has three main subunits: a(1), b(2) and c(10-14). The alpha and beta chains form an alternating ring which encloses part of the gamma chain. F(1) is attached to F(0) by a central stalk formed by the gamma and epsilon chains, while a peripheral stalk is formed by the delta and b chains.

It localises to the cell inner membrane. F(1)F(0) ATP synthase produces ATP from ADP in the presence of a proton or sodium gradient. F-type ATPases consist of two structural domains, F(1) containing the extramembraneous catalytic core and F(0) containing the membrane proton channel, linked together by a central stalk and a peripheral stalk. During catalysis, ATP synthesis in the catalytic domain of F(1) is coupled via a rotary mechanism of the central stalk subunits to proton translocation. In terms of biological role, this protein is part of the stalk that links CF(0) to CF(1). It either transmits conformational changes from CF(0) to CF(1) or is implicated in proton conduction. The sequence is that of ATP synthase subunit delta from Coxiella burnetii (strain CbuG_Q212) (Coxiella burnetii (strain Q212)).